The following is an 888-amino-acid chain: Patched domain-containing protein 1 (888 aa).

The helical transmembrane segment at 20-40 threads the bilayer; that stretch reads FIASHPVFFASAPVLISILLG. N-linked (GlcNAc...) asparagine glycans are attached at residues Asn-77, Asn-133, and Asn-167. The region spanning 268-427 is the SSD domain; the sequence is SERYLVTSLI…LSFYGSSLVF (160 aa). Helical transmembrane passes span 273–293 and 298–318; these read VTSL…QDCV and WLGL…AGII. N-linked (GlcNAc...) asparagine glycans are attached at residues Asn-319 and Asn-326. 4 helical membrane-spanning segments follow: residues 328–348, 373–393, 407–427, and 502–522; these read TFLG…FEML, LSFS…ASPF, CIAI…SLVF, and PFVV…YLQV. N-linked (GlcNAc...) asparagine glycans are attached at residues Asn-568, Asn-599, and Asn-608. The next 2 helical transmembrane spans lie at 707 to 727 and 738 to 758; these read ALFL…NVWI and VIGF…LCLI. A glycan (N-linked (GlcNAc...) asparagine) is linked at Asn-762. The chain crosses the membrane as a helical span at residues 795–815; sequence GVAILQSYLCYIVGLFPLAAV. A glycan (N-linked (GlcNAc...) asparagine) is linked at Asn-818. Residues 826–846 form a helical membrane-spanning segment; the sequence is CLFLIAFVTFFHCFAILPVIL.

It belongs to the patched family. Broadly expressed in the brain. Selectively expressed in the thalamic reticular nucleus (TRN) in early development and continues to be enriched in this structure throughout adult life.

Its subcellular location is the cell membrane. It localises to the cell projection. It is found in the dendritic spine. In terms of biological role, required for the development and function of the thalamic reticular nucleus (TRN), a part of the thalamus that is critical for thalamocortical transmission, generation of sleep rhythms, sensorimotor processing and attention. Can bind cholesterol in vitro. This Mus musculus (Mouse) protein is Patched domain-containing protein 1.